The following is a 95-amino-acid chain: Protein RnfH (95 aa).

Belongs to the UPF0125 (RnfH) family.

This Methylococcus capsulatus (strain ATCC 33009 / NCIMB 11132 / Bath) protein is Protein RnfH.